Consider the following 430-residue polypeptide: Glucose-1-phosphate adenylyltransferase (430 aa).

Residues glycine 163, 178 to 179, and serine 210 each bind alpha-D-glucose 1-phosphate; that span reads EK.

It belongs to the bacterial/plant glucose-1-phosphate adenylyltransferase family. In terms of assembly, homotetramer.

The catalysed reaction is alpha-D-glucose 1-phosphate + ATP + H(+) = ADP-alpha-D-glucose + diphosphate. Its pathway is glycan biosynthesis; glycogen biosynthesis. In terms of biological role, involved in the biosynthesis of ADP-glucose, a building block required for the elongation reactions to produce glycogen. Catalyzes the reaction between ATP and alpha-D-glucose 1-phosphate (G1P) to produce pyrophosphate and ADP-Glc. The sequence is that of Glucose-1-phosphate adenylyltransferase from Synechococcus elongatus (strain ATCC 33912 / PCC 7942 / FACHB-805) (Anacystis nidulans R2).